A 261-amino-acid chain; its full sequence is Phosphate import ATP-binding protein PstB 4 (261 aa).

In terms of domain architecture, ABC transporter spans 8–256 (IKVNNLSFYY…PHDSRTREYV (249 aa)). Position 40-47 (40-47 (GPSGCGKS)) interacts with ATP.

This sequence belongs to the ABC transporter superfamily. Phosphate importer (TC 3.A.1.7) family. As to quaternary structure, the complex is composed of two ATP-binding proteins (PstB), two transmembrane proteins (PstC and PstA) and a solute-binding protein (PstS).

Its subcellular location is the cell inner membrane. It carries out the reaction phosphate(out) + ATP + H2O = ADP + 2 phosphate(in) + H(+). Its function is as follows. Part of the ABC transporter complex PstSACB involved in phosphate import. Responsible for energy coupling to the transport system. The polypeptide is Phosphate import ATP-binding protein PstB 4 (Trichormus variabilis (strain ATCC 29413 / PCC 7937) (Anabaena variabilis)).